A 508-amino-acid chain; its full sequence is Photosystem II CP47 reaction center protein (508 aa).

Helical transmembrane passes span 21 to 36 (AVHI…WAGS), 101 to 115 (IVFS…IWHW), 140 to 156 (GIHL…FGAF), 203 to 218 (IAAG…FHLS), 237 to 252 (VLSS…AFVV), and 457 to 472 (SFAL…HGAR).

The protein belongs to the PsbB/PsbC family. PsbB subfamily. PSII is composed of 1 copy each of membrane proteins PsbA, PsbB, PsbC, PsbD, PsbE, PsbF, PsbH, PsbI, PsbJ, PsbK, PsbL, PsbM, PsbT, PsbX, PsbY, PsbZ, Psb30/Ycf12, at least 3 peripheral proteins of the oxygen-evolving complex and a large number of cofactors. It forms dimeric complexes. Binds multiple chlorophylls. PSII binds additional chlorophylls, carotenoids and specific lipids. is required as a cofactor.

The protein resides in the plastid. It is found in the chloroplast thylakoid membrane. One of the components of the core complex of photosystem II (PSII). It binds chlorophyll and helps catalyze the primary light-induced photochemical processes of PSII. PSII is a light-driven water:plastoquinone oxidoreductase, using light energy to abstract electrons from H(2)O, generating O(2) and a proton gradient subsequently used for ATP formation. The polypeptide is Photosystem II CP47 reaction center protein (Trachelium caeruleum (Blue throatwort)).